The sequence spans 1116 residues: Probable chitinase LysM11 (1116 aa).

The LysM domain occupies 233 to 283; it reads GTYTIQTNDNCAEIAAHFGVTQDDIYDLNEDTWGWAGCGTNDLKADQVICL. The region spanning 346–719 is the GH18 domain; the sequence is FYHVAYFEVF…LGVDPDSDEA (374 aa). The active-site Proton donor is E466. Positions 467 and 701 each coordinate chitin.

The protein belongs to the glycosyl hydrolase 18 family. Chitinase class V subfamily.

The enzyme catalyses Random endo-hydrolysis of N-acetyl-beta-D-glucosaminide (1-&gt;4)-beta-linkages in chitin and chitodextrins.. In terms of biological role, probable chitinase involved in the degradation of chitin, a component of the cell walls of fungi and exoskeletal elements of some animals (including worms and arthropods). Might be involved in manipulation of host defenses for successful infection. The chain is Probable chitinase LysM11 from Penicillium expansum (Blue mold rot fungus).